Here is a 78-residue protein sequence, read N- to C-terminus: Large ribosomal subunit protein bL28 (78 aa).

Belongs to the bacterial ribosomal protein bL28 family.

The chain is Large ribosomal subunit protein bL28 from Prochlorococcus marinus (strain AS9601).